The primary structure comprises 130 residues: MTEKLGILAIGHGSKLPYNKEVVSQIADYIAQKHSDVVVRAGFMENSEPTLEEAIAGFAGTGVTKIAAVPVFLASGVHITKDIPGILSLDEKGCGILNIDGKDVPLCYAKPLGADELIADLVFKRVQEAL.

The active-site Proton acceptor is histidine 12. Residue histidine 12 coordinates Co(2+). Ni(2+) is bound at residue histidine 12. Substrate contacts are provided by residues glutamate 48 and 73–78 (LASGVH). Histidine 78 contributes to the Co(2+) binding site. Histidine 78 provides a ligand contact to Ni(2+).

The protein belongs to the CbiX family. CbiXS subfamily. Homotetramer; dimer of dimers.

The enzyme catalyses Co-sirohydrochlorin + 2 H(+) = sirohydrochlorin + Co(2+). It catalyses the reaction Ni-sirohydrochlorin + 2 H(+) = sirohydrochlorin + Ni(2+). The protein operates within cofactor biosynthesis; adenosylcobalamin biosynthesis; cob(II)yrinate a,c-diamide from sirohydrochlorin (anaerobic route): step 1/10. Catalyzes the insertion of Co(2+) into sirohydrochlorin as part of the anaerobic pathway to cobalamin biosynthesis (Potential). Involved in the biosynthesis of the unique nickel-containing tetrapyrrole coenzyme F430, the prosthetic group of methyl-coenzyme M reductase (MCR), which plays a key role in methanogenesis and anaerobic methane oxidation. Catalyzes the insertion of Ni(2+) into sirohydrochlorin to yield Ni-sirohydrochlorin. This chain is Sirohydrochlorin cobaltochelatase, found in Methanosarcina acetivorans (strain ATCC 35395 / DSM 2834 / JCM 12185 / C2A).